Here is a 320-residue protein sequence, read N- to C-terminus: MELMARFLERYLHFAPTNTEPPGTLIWFLGHSYKIEDSQWPEKFLYDSFSLITITYRSGIEGLENMTSDTGWGCMIRSTQTLLANCLRICYPEKQLKEILALFADEPSAPFSIHQFVTMGKTLCDINPGQWFGPTTSCSCVARLSDQNPDVPLHVYVARNGNAIYRDQLSKVSFPVLLLIPTRLGIDSINESYYDQLLQVFEIRSFVGITGGRPRSAHYFYARQNQYFFYLDPHCTHFAHTTTQPASEETFHSATLRRVAIQDLDPCMIFGFLIRDEEEWHSFEANQKYFADIVQIFDSEPQPVETHDDFVLDENVEDHL.

Cysteine 74 (nucleophile) is an active-site residue. Residues aspartate 232 and histidine 234 contribute to the active site.

The protein belongs to the peptidase C54 family.

The protein resides in the cytoplasm. The protein localises to the nucleus. It is found in the preautophagosomal structure. It catalyses the reaction [protein]-C-terminal L-amino acid-glycyl-phosphatidylethanolamide + H2O = [protein]-C-terminal L-amino acid-glycine + a 1,2-diacyl-sn-glycero-3-phosphoethanolamine. Functionally, cysteine protease that plays a key role in cytoplasm to vacuole transport (Cvt) and autophagy by mediating both proteolytic activation and delipidation of atg8. Required for selective autophagic degradation of the nucleus (nucleophagy) as well as for mitophagy which contributes to regulate mitochondrial quantity and quality by eliminating the mitochondria to a basal level to fulfill cellular energy requirements and preventing excess ROS production. The protease activity is required for proteolytic activation of atg8: cleaves the C-terminal amino acid of atg8 to reveal a C-terminal glycine. Atg8 ubiquitin-like activity requires the exposure of the glycine at the C-terminus for its conjugation to phosphatidylethanolamine (PE) and its insertion to membranes, which is necessary for autophagy. The atg8-PE conjugate mediates tethering between adjacent membranes and stimulates membrane hemifusion, leading to expansion of the autophagosomal membrane during autophagy. In addition to the protease activity, also catalyzes deconjugation of PE-conjugated forms of atg8 during macroautophagy: atg8 delipidation is required to release the protein from membranes, which facilitates multiple events during macroautophagy, and especially for efficient autophagosome biogenesis, the assembly of atg9-containing tubulovesicular clusters into phagophores/autophagosomes, and for the disassembly of PAS-associated ATG components. Atg8 delipidation by atg4 also recycles atg8-PE generated on inappropriate membranes to maintain a reservoir of unlipidated atg8 that is required for autophagosome formation at the PAS. Plays a role in meiosis and sporulation. This is Probable cysteine protease atg4 (atg4) from Schizosaccharomyces pombe (strain 972 / ATCC 24843) (Fission yeast).